A 532-amino-acid chain; its full sequence is Membrane protein insertase YidC (532 aa).

Helical transmembrane passes span 7–27, 336–356, 413–433, 450–470, and 492–512; these read FFIF…QSQM, LTIL…ITFI, GGFL…YMLI, LSSQ…MFFI, and PVIF…YYII.

Belongs to the OXA1/ALB3/YidC family. Type 1 subfamily. Interacts with the Sec translocase complex via SecD. Specifically interacts with transmembrane segments of nascent integral membrane proteins during membrane integration.

Its subcellular location is the cell membrane. In terms of biological role, required for the insertion and/or proper folding and/or complex formation of integral membrane proteins into the membrane. Involved in integration of membrane proteins that insert both dependently and independently of the Sec translocase complex, as well as at least some lipoproteins. Aids folding of multispanning membrane proteins. This chain is Membrane protein insertase YidC, found in Buchnera aphidicola subsp. Acyrthosiphon pisum (strain Tuc7).